The following is a 185-amino-acid chain: Ribosome-recycling factor (185 aa).

The protein belongs to the RRF family.

The protein localises to the cytoplasm. In terms of biological role, responsible for the release of ribosomes from messenger RNA at the termination of protein biosynthesis. May increase the efficiency of translation by recycling ribosomes from one round of translation to another. The sequence is that of Ribosome-recycling factor from Saccharopolyspora erythraea (strain ATCC 11635 / DSM 40517 / JCM 4748 / NBRC 13426 / NCIMB 8594 / NRRL 2338).